A 367-amino-acid chain; its full sequence is Aspartate-semialdehyde dehydrogenase (367 aa).

NADP(+)-binding positions include 10-13, 37-38, and Gln-73; these read RGMV and TS. A phosphate-binding site is contributed by Arg-102. Cys-135 acts as the Acyl-thioester intermediate in catalysis. An S-cysteinyl cysteine; in inhibited form modification is found at Cys-135. A substrate-binding site is contributed by Gln-162. NADP(+) is bound by residues 165 to 166 and Pro-193; that span reads SG. Glu-241 is a substrate binding site. Residue Lys-244 participates in phosphate binding. Residue Arg-267 coordinates substrate. The active-site Proton acceptor is His-274. NADP(+) is bound at residue Gln-350.

This sequence belongs to the aspartate-semialdehyde dehydrogenase family. As to quaternary structure, homodimer.

It catalyses the reaction L-aspartate 4-semialdehyde + phosphate + NADP(+) = 4-phospho-L-aspartate + NADPH + H(+). The protein operates within amino-acid biosynthesis; L-lysine biosynthesis via DAP pathway; (S)-tetrahydrodipicolinate from L-aspartate: step 2/4. It participates in amino-acid biosynthesis; L-methionine biosynthesis via de novo pathway; L-homoserine from L-aspartate: step 2/3. It functions in the pathway amino-acid biosynthesis; L-threonine biosynthesis; L-threonine from L-aspartate: step 2/5. Catalyzes the NADPH-dependent formation of L-aspartate-semialdehyde (L-ASA) by the reductive dephosphorylation of L-aspartyl-4-phosphate. In Escherichia coli O6:H1 (strain CFT073 / ATCC 700928 / UPEC), this protein is Aspartate-semialdehyde dehydrogenase.